A 375-amino-acid chain; its full sequence is Trans-enoyl reductase BOA5 (375 aa).

The span at 1 to 16 (MQAVIQTGPGTLQLTE) shows a compositional bias: polar residues. The tract at residues 1 to 21 (MQAVIQTGPGTLQLTENVPKP) is disordered. 42 to 45 (SDWK) is an NADP(+) binding site. 121–128 (VGIVTTGL) lines the substrate pocket. Positions 147–168 (GSAAPQKTRVGPRGWSGGDALT) are disordered. NADP(+) contacts are provided by residues 185 to 188 (STST), 208 to 211 (SPHN), tyrosine 226, and 273 to 274 (LD). Residue 294–298 (ALTIF) participates in substrate binding. 363–364 (VS) is an NADP(+) binding site.

Belongs to the zinc-containing alcohol dehydrogenase family. Monomer.

It functions in the pathway polyketide biosynthesis. Its function is as follows. Trans-enoyl reductase; part of the gene cluster A that mediates the biosynthesis of botcinic acid and its botcinin derivatives, acetate-derived polyketides that contribute to virulence when combined with the sesquiterpene botrydial. Botcinic acid and its derivatives have been shown to induce chlorosis and necrosis during host plant infection, but also have antifungal activities. Two polyketide synthases, BOA6 and BOA9, are involved in the biosynthesis of botcinins. BOA6 mediates the formation of the per-methylated tetraketide core by condensation of four units of malonyl-CoA with one unit of acetyl-CoA, which would be methylated in activated methylene groups to yield a bicyclic acid intermediate that could then either be converted to botrylactone derivatives or lose the starter acetate unit through a retro-Claisen type C-C bond cleavage to yield botcinin derivatives. The second polyketide synthase, BOA9, is probably required for the biosynthesis of the tetraketide side chain of botcinins. The methyltransferase (MT) domain within BOA6 is probably responsible for the incorporation of four methyl groups. The trans-enoyl reductase BOA5 might take over the enoyl reductase function of BOA6 that misses an ER domain. The monooxygenases BOA2, BOA3 and BOA4 might be involved in further hydroxylations at C4, C5 and C8, whereas BOA7, close to BOA9, could potentially be involved in the hydroxylation at C4 in the side chain of botcinins. In Botryotinia fuckeliana (strain B05.10) (Noble rot fungus), this protein is Trans-enoyl reductase BOA5.